Consider the following 236-residue polypeptide: MSSIDKKELEKFEKISHNWWNKDGDFGILHCINPIRLEYIIEKITSHYNDISKLEILDVGCGGGLIATPLAAQGFNVTAIDALQSNIETATAYAKENGVKINYLQSTIEELKSNKLYDVVICLEVIEHVENVQQFILNLVQHIKPNGIAIISTINRMKKAYILGIIVAEYILGWVPKNTHNYSKFLKPSEIYEMLTDTGIEIKELKGLIYDMAKNEWKLSDNIEVNYFMYLERNTH.

4 residues coordinate S-adenosyl-L-methionine: Arg36, Gly60, Asp81, and Leu123.

Belongs to the methyltransferase superfamily. UbiG/COQ3 family.

The enzyme catalyses a 3-demethylubiquinol + S-adenosyl-L-methionine = a ubiquinol + S-adenosyl-L-homocysteine + H(+). It catalyses the reaction a 3-(all-trans-polyprenyl)benzene-1,2-diol + S-adenosyl-L-methionine = a 2-methoxy-6-(all-trans-polyprenyl)phenol + S-adenosyl-L-homocysteine + H(+). It participates in cofactor biosynthesis; ubiquinone biosynthesis. O-methyltransferase that catalyzes the 2 O-methylation steps in the ubiquinone biosynthetic pathway. The polypeptide is Ubiquinone biosynthesis O-methyltransferase (Rickettsia canadensis (strain McKiel)).